Consider the following 311-residue polypeptide: Transmembrane protein DDB_G0273707/DDB_G0273361 (311 aa).

The interval 1-113 (MNEIEVDNLS…NNNNNKNENN (113 aa)) is disordered. N8 carries N-linked (GlcNAc...) asparagine glycosylation. A compositionally biased stretch (polar residues) spans 9–18 (LSHTNKNVAT). 4 N-linked (GlcNAc...) asparagine glycosylation sites follow: N35, N38, N62, and N76. Low complexity-rich tracts occupy residues 37–67 (SNNSNNNNNNNNNNNNNNNNNNNNNNNSNSN) and 76–111 (NNSNNNNNNNNNNNNNNNNNNNNNNNNNNNNNNKNE). The stretch at 95-124 (NNNNNNNNNNNNNNKNENNNKIKNEKINIL) forms a coiled coil. Transmembrane regions (helical) follow at residues 150 to 170 (LEEIGWSWLSSFIGILVLALL), 181 to 201 (IFLLGSFAASAVLIFGAPKSP), 208 to 228 (LVLGHIVSATVGSIIRVALVY), 235 to 255 (VACALAVSLAIVGMHFTKSIH), and 276 to 296 (FYYIFVPVASGSLTMLLTALI).

The protein resides in the membrane. The chain is Transmembrane protein DDB_G0273707/DDB_G0273361 from Dictyostelium discoideum (Social amoeba).